We begin with the raw amino-acid sequence, 321 residues long: Lipoyl synthase (321 aa).

Residues Cys68, Cys73, Cys79, Cys94, Cys98, Cys101, and Ser308 each contribute to the [4Fe-4S] cluster site. Residues 80 to 297 (FNHGTATFMI…KEEAMAMGFT (218 aa)) form the Radical SAM core domain.

The protein belongs to the radical SAM superfamily. Lipoyl synthase family. The cofactor is [4Fe-4S] cluster.

The protein resides in the cytoplasm. The enzyme catalyses [[Fe-S] cluster scaffold protein carrying a second [4Fe-4S](2+) cluster] + N(6)-octanoyl-L-lysyl-[protein] + 2 oxidized [2Fe-2S]-[ferredoxin] + 2 S-adenosyl-L-methionine + 4 H(+) = [[Fe-S] cluster scaffold protein] + N(6)-[(R)-dihydrolipoyl]-L-lysyl-[protein] + 4 Fe(3+) + 2 hydrogen sulfide + 2 5'-deoxyadenosine + 2 L-methionine + 2 reduced [2Fe-2S]-[ferredoxin]. It functions in the pathway protein modification; protein lipoylation via endogenous pathway; protein N(6)-(lipoyl)lysine from octanoyl-[acyl-carrier-protein]: step 2/2. In terms of biological role, catalyzes the radical-mediated insertion of two sulfur atoms into the C-6 and C-8 positions of the octanoyl moiety bound to the lipoyl domains of lipoate-dependent enzymes, thereby converting the octanoylated domains into lipoylated derivatives. The protein is Lipoyl synthase of Serratia proteamaculans (strain 568).